The primary structure comprises 125 residues: Glycine cleavage system H protein (125 aa).

The 83-residue stretch at 19 to 101 (IATIGITDYA…MGDGWFIKLR (83 aa)) folds into the Lipoyl-binding domain. K60 carries the N6-lipoyllysine modification.

It belongs to the GcvH family. In terms of assembly, the glycine cleavage system is composed of four proteins: P, T, L and H. (R)-lipoate is required as a cofactor.

Its function is as follows. The glycine cleavage system catalyzes the degradation of glycine. The H protein shuttles the methylamine group of glycine from the P protein to the T protein. The chain is Glycine cleavage system H protein from Parvibaculum lavamentivorans (strain DS-1 / DSM 13023 / NCIMB 13966).